Reading from the N-terminus, the 491-residue chain is Glutamyl-tRNA(Gln) amidotransferase subunit A (491 aa).

Catalysis depends on charge relay system residues K79 and S158. Catalysis depends on S182, which acts as the Acyl-ester intermediate.

It belongs to the amidase family. GatA subfamily. In terms of assembly, heterotrimer of A, B and C subunits.

The catalysed reaction is L-glutamyl-tRNA(Gln) + L-glutamine + ATP + H2O = L-glutaminyl-tRNA(Gln) + L-glutamate + ADP + phosphate + H(+). Allows the formation of correctly charged Gln-tRNA(Gln) through the transamidation of misacylated Glu-tRNA(Gln) in organisms which lack glutaminyl-tRNA synthetase. The reaction takes place in the presence of glutamine and ATP through an activated gamma-phospho-Glu-tRNA(Gln). This chain is Glutamyl-tRNA(Gln) amidotransferase subunit A, found in Maricaulis maris (strain MCS10) (Caulobacter maris).